A 148-amino-acid polypeptide reads, in one-letter code: Large ribosomal subunit protein bL9 (148 aa).

This sequence belongs to the bacterial ribosomal protein bL9 family.

Binds to the 23S rRNA. This is Large ribosomal subunit protein bL9 from Methylobacillus flagellatus (strain ATCC 51484 / DSM 6875 / VKM B-1610 / KT).